Consider the following 75-residue polypeptide: Small integral membrane protein 7-A (75 aa).

The signal sequence occupies residues 1 to 17; that stretch reads MIGDLLLFGTLLVNAGA. Over 18–53 the chain is Extracellular; it reads VLNFKLKKKESQGFGDDLTEATTGDNIREFLLSLRY. Residues 54 to 74 form a helical membrane-spanning segment; it reads FRIFIALWNIFMMFCMIVLFG. A topological domain (cytoplasmic) is located at residue Ser-75.

It belongs to the SMIM7 family.

The protein resides in the membrane. This Xenopus laevis (African clawed frog) protein is Small integral membrane protein 7-A (smim7-a).